The chain runs to 375 residues: 3-dehydroquinate synthase (375 aa).

NAD(+)-binding positions include 82-87 (SGETSK), 116-120 (GVVGD), 140-141 (TT), Lys-153, and Lys-162. Zn(2+) contacts are provided by Glu-195, His-259, and His-276.

It belongs to the sugar phosphate cyclases superfamily. Dehydroquinate synthase family. The cofactor is NAD(+). Requires Co(2+) as cofactor. It depends on Zn(2+) as a cofactor.

The protein localises to the cytoplasm. It catalyses the reaction 7-phospho-2-dehydro-3-deoxy-D-arabino-heptonate = 3-dehydroquinate + phosphate. It functions in the pathway metabolic intermediate biosynthesis; chorismate biosynthesis; chorismate from D-erythrose 4-phosphate and phosphoenolpyruvate: step 2/7. Functionally, catalyzes the conversion of 3-deoxy-D-arabino-heptulosonate 7-phosphate (DAHP) to dehydroquinate (DHQ). This chain is 3-dehydroquinate synthase, found in Rhodopirellula baltica (strain DSM 10527 / NCIMB 13988 / SH1).